A 362-amino-acid polypeptide reads, in one-letter code: UV excision repair protein RAD23 homolog A (362 aa).

Residues 1–81 (MAVTITLKTL…VVVMVTKAKT (81 aa)) enclose the Ubiquitin-like domain. Disordered stretches follow at residues 80 to 160 (KTSP…LVTG) and 201 to 227 (GIPG…TEAG). The segment covering 88–109 (PSEASPTATPESSTSFPSAPAS) has biased composition (low complexity). K122 participates in a covalent cross-link: Glycyl lysine isopeptide (Lys-Gly) (interchain with G-Cter in ubiquitin). A phosphoserine mark is found at S123, S128, S133, S136, and S138. Low complexity predominate over residues 126-144 (EESAPTTSPESVSGSVPSS). Positions 161–201 (SEYETMLTEIMSMGYERERVVAALRASYNNPHRAVEYLLTG) constitute a UBA 1 domain. A phosphoserine mark is found at S205, S294, and S356. A UBA 2 domain is found at 317 to 357 (PQEKEAIERLKALGFPESLVIQAYFACEKNENLAANFLLSQ).

Belongs to the RAD23 family. In terms of assembly, interacts with XPC; the interaction is suggesting the existence of a functional equivalent variant XPC complex. Interacts with PSMD4 and PSMC5. Interacts with ATXN3. Interacts with UBQLN2.

The protein localises to the nucleus. Functionally, multiubiquitin chain receptor involved in modulation of proteasomal degradation. Binds to 'Lys-48'-linked polyubiquitin chains in a length-dependent manner and with a lower affinity to 'Lys-63'-linked polyubiquitin chains. Proposed to be capable to bind simultaneously to the 26S proteasome and to polyubiquitinated substrates and to deliver ubiquitinated proteins to the proteasome. Involved in nucleotide excision repair and is thought to be functional equivalent for RAD23B in global genome nucleotide excision repair (GG-NER) by association with XPC. In vitro, XPC:RAD23A dimer has NER activity. Can stabilize XPC. This is UV excision repair protein RAD23 homolog A (RAD23A) from Bos taurus (Bovine).